We begin with the raw amino-acid sequence, 457 residues long: Glycine receptor subunit alpha-1 (457 aa).

An N-terminal signal peptide occupies residues 1–28; that stretch reads MYSFNTLRFYLWETIVFFSLAASKEAEA. The Extracellular portion of the chain corresponds to 29–250; the sequence is ARSAPKPMSP…RFHLERQMGY (222 aa). An N-linked (GlcNAc...) asparagine glycan is attached at Asn66. Glycine contacts are provided by Arg93 and Ser157. Cys166 and Cys180 are joined by a disulfide. 2 residues coordinate Zn(2+): Glu220 and Asp222. A disulfide bridge connects residues Cys226 and Cys237. 230–235 provides a ligand contact to strychnine; the sequence is YNTGKF. Thr232 contacts glycine. Residue His243 coordinates Zn(2+). Residues 251–272 form a helical membrane-spanning segment; sequence YLIQMYIPSLLIVILSWISFWI. Residues 273–277 lie on the Cytoplasmic side of the membrane; it reads NMDAA. Residues 278–298 traverse the membrane as a helical segment; it reads PARVGLGITTVLTMTTQSSGS. Topologically, residues 299–309 are extracellular; the sequence is RASLPKVSYVK. The chain crosses the membrane as a helical span at residues 310 to 330; it reads AIDIWMAVCLLFVFSALLEYA. At 331 to 425 the chain is on the cytoplasmic side; the sequence is AVNFVSRQHK…FIQRAKKIDK (95 aa). Residues 391–410 are disordered; it reads KGANNNNTTNPPPAPSKSPE. Residues 426–446 form a helical membrane-spanning segment; it reads ISRIGFPMAFLIFNMFYWIIY. Residues 447-457 are Extracellular-facing; that stretch reads KIVRREDVHNK.

This sequence belongs to the ligand-gated ion channel (TC 1.A.9) family. Glycine receptor (TC 1.A.9.3) subfamily. GLRA1 sub-subfamily. As to quaternary structure, interacts with GLRB to form heteropentameric channels; this is probably the predominant form in vivo. Heteropentamer composed of four GLRA1 subunits and one GLRB subunit. Heteropentamer composed of two GLRA1 and three GLRB. Heteropentamer composed of three GLRA1 and two GLRB. Homopentamer (in vitro). Both homopentamers and heteropentamers form functional ion channels, but their characteristics are subtly different. In terms of tissue distribution, detected in spinal cord neurons. Detected in brain stem neurons. Detected at lower levels in hippocampus and cerebellum. Detected in the inner plexiform layer of the retina (at protein level).

The protein resides in the postsynaptic cell membrane. It is found in the synapse. It localises to the perikaryon. Its subcellular location is the cell projection. The protein localises to the dendrite. The protein resides in the cell membrane. It catalyses the reaction chloride(in) = chloride(out). With respect to regulation, channel opening is triggered by extracellular glycine. Channel characteristics depend on the subunit composition; heteropentameric channels are activated by lower glycine levels and display faster desensitization. Channel opening is also triggered by taurine and beta-alanine. Inhibited by strychnine. Strychnine binding locks the channel in a closed conformation and prevents channel opening in response to extracellular glycine. Inhibited by picrotoxin. Channel activity is enhanced by 5 uM Zn(2+) and inhibited by 100 uM Zn(2+). Its function is as follows. Subunit of heteromeric glycine-gated chloride channels. Plays an important role in the down-regulation of neuronal excitability. Contributes to the generation of inhibitory postsynaptic currents. Channel activity is potentiated by ethanol. Potentiation of channel activity by intoxicating levels of ethanol contribute to the sedative effects of ethanol. The protein is Glycine receptor subunit alpha-1 (Glra1) of Mus musculus (Mouse).